A 973-amino-acid polypeptide reads, in one-letter code: ATP-dependent DNA helicase Q5 (973 aa).

Residues 39–213 (MAVVKGDKDV…FAALHLKQPV (175 aa)) enclose the Helicase ATP-binding domain. 52–59 (MPTGAGKS) is an ATP binding site. The short motif at 157-160 (DEAH) is the DEAH box element. The Helicase C-terminal domain maps to 241–398 (NLRDFCLKAL…NKPSDKATLL (158 aa)). Cysteine 412, cysteine 428, cysteine 432, and cysteine 435 together coordinate Zn(2+). 2 positions are modified to phosphoserine: serine 489 and serine 492. Positions 491–621 (GSGDEGRDEA…ASKDGQLYDM (131 aa)) are interaction with POLR2A. Disordered regions lie at residues 518–538 (GKEA…LRDA), 679–795 (TEKL…VPGK), and 822–884 (CSLE…AREP). Threonine 527 carries the phosphothreonine modification. The interaction with RAD51 stretch occupies residues 653 to 726 (PKRVGAGFSK…APGSRTNCGD (74 aa)). Serine 728 bears the Phosphoserine; by CDK1 mark. The segment covering 840–856 (TQAEKRPRPQQESQEKR) has biased composition (basic and acidic residues). Over residues 863–878 (PSTNSSALASDPSTEN) the composition is skewed to polar residues.

Belongs to the helicase family. RecQ subfamily. In terms of assembly, monomer. Interacts with TOP2A, TOP3A and TOP3B. Interacts with RNA polymerase II subunit POLR2A. Identified in a complex with the RNA polymerase II core bound to DNA. Interacts with RAD51. Interacts with WRN; this interaction stimulates WRN helicase activity on DNA fork duplexes. Interacts with MUS1; this interaction promotes MUS81-dependent mitotic DNA synthesis. Zn(2+) serves as cofactor. Post-translationally, phosphorylated by CDK1 at Ser-728; this phosphorylation is required for RECQL5-mediated disruption of RAD51 filaments on stalled replication forks.

The protein localises to the nucleus. Its subcellular location is the nucleoplasm. It carries out the reaction Couples ATP hydrolysis with the unwinding of duplex DNA by translocating in the 3'-5' direction.. The catalysed reaction is ATP + H2O = ADP + phosphate + H(+). Its function is as follows. DNA helicase that plays an important role in DNA replication, transcription and repair. Binds to the RNA polymerase II subunit POLR2A during transcription elongation and suppresses transcription-associated genomic instability. Also associates with POLR1A and enforces the stability of ribosomal DNA arrays. Plays an important role in mitotic chromosome separation after cross-over events and cell cycle progress. Mechanistically, removes RAD51 filaments protecting stalled replication forks at common fragile sites and stimulates MUS81-EME1 endonuclease leading to mitotic DNA synthesis. Required for efficient DNA repair, including repair of inter-strand cross-links. Stimulates DNA decatenation mediated by TOP2A. Prevents sister chromatid exchange and homologous recombination. The chain is ATP-dependent DNA helicase Q5 (Recql5) from Rattus norvegicus (Rat).